A 122-amino-acid chain; its full sequence is Large ribosomal subunit protein bL12 (122 aa).

The protein belongs to the bacterial ribosomal protein bL12 family. Homodimer. Part of the ribosomal stalk of the 50S ribosomal subunit. Forms a multimeric L10(L12)X complex, where L10 forms an elongated spine to which 2 to 4 L12 dimers bind in a sequential fashion. Binds GTP-bound translation factors.

In terms of biological role, forms part of the ribosomal stalk which helps the ribosome interact with GTP-bound translation factors. Is thus essential for accurate translation. In Glaesserella parasuis serovar 5 (strain SH0165) (Haemophilus parasuis), this protein is Large ribosomal subunit protein bL12.